Here is a 520-residue protein sequence, read N- to C-terminus: Ribonuclease Y (520 aa).

Residues 5 to 25 form a helical membrane-spanning segment; the sequence is ITIISSLLFLIVGLVVGSLIF. The tract at residues 70 to 127 is disordered; the sequence is RTEIENELRGRRTETQKAENRLLQREENLDRKDTSLSKREATLERKEESISKRQQQIE. Residues 210–273 form the KH domain; sequence TVSVVTLPND…EIARIALEKL (64 aa). Positions 336-429 constitute an HD domain; the sequence is VLNHSLEVSK…VAAADALSAA (94 aa).

Belongs to the RNase Y family.

The protein localises to the cell membrane. Endoribonuclease that initiates mRNA decay. The protein is Ribonuclease Y of Listeria welshimeri serovar 6b (strain ATCC 35897 / DSM 20650 / CCUG 15529 / CIP 8149 / NCTC 11857 / SLCC 5334 / V8).